Here is a 495-residue protein sequence, read N- to C-terminus: Glycerol kinase (495 aa).

Residue Thr-11 coordinates ADP. Positions 11, 12, and 13 each coordinate ATP. Residue Thr-11 participates in sn-glycerol 3-phosphate binding. Residue Arg-15 participates in ADP binding. The sn-glycerol 3-phosphate site is built by Arg-81, Glu-82, Tyr-133, and Asp-242. Residues Arg-81, Glu-82, Tyr-133, Asp-242, and Gln-243 each coordinate glycerol. Residues Thr-264 and Gly-307 each coordinate ADP. ATP contacts are provided by Thr-264, Gly-307, Gln-311, and Gly-410. Gly-410 serves as a coordination point for ADP.

The protein belongs to the FGGY kinase family.

It catalyses the reaction glycerol + ATP = sn-glycerol 3-phosphate + ADP + H(+). Its pathway is polyol metabolism; glycerol degradation via glycerol kinase pathway; sn-glycerol 3-phosphate from glycerol: step 1/1. Inhibited by fructose 1,6-bisphosphate (FBP). Functionally, key enzyme in the regulation of glycerol uptake and metabolism. Catalyzes the phosphorylation of glycerol to yield sn-glycerol 3-phosphate. This is Glycerol kinase from Roseobacter denitrificans (strain ATCC 33942 / OCh 114) (Erythrobacter sp. (strain OCh 114)).